Consider the following 236-residue polypeptide: MMGIFLVYVGFVFFSVLYVQQGLSSQAKFTEFPRNVTATEGQNVEMSCAFQSGSASVYLEIQWWFLRGPEDLDPGAEGAGAQVELLPDRDPDSDGTKISTVKVQGNDISHKLQISKVRKKDEGLYECRVTDANYGELQEHKAQAYLKVNANSHARRMQAFEASPMWLQDMKPRKNVSAAIPSSIHGSANQRTHSTSSPQVVAKIPKQSPQSGARIATSHGLSVLLLVCGFVKGALL.

A signal peptide spans Met1 to Ser24. The Ig-like V-type domain occupies Ala27–Gln143. The N-linked (GlcNAc...) asparagine glycan is linked to Asn35. Residues Cys48 and Cys127 are joined by a disulfide bond. Asn175 is a glycosylation site (N-linked (GlcNAc...) asparagine). Polar residues predominate over residues Ile184–Gln199. A disordered region spans residues Ile184–Lys206.

In terms of assembly, homodimer. In terms of processing, N-glycosylated. N-linked glycosylation is critical for secretion but not for preadipocyte cell differentiation activity.

It is found in the secreted. In terms of biological role, plays a role in the regulation of the early stage of white and brown preadipocyte cell differentiation. Promotes adipogenic commitment of preadipocytes by increasing gene expression of the transcription factor PPARG in a BMP4-dependent signaling pathway. The sequence is that of V-set and transmembrane domain-containing protein 2A from Homo sapiens (Human).